The primary structure comprises 366 residues: Histidinol-phosphate aminotransferase (366 aa).

N6-(pyridoxal phosphate)lysine is present on Lys-227.

Belongs to the class-II pyridoxal-phosphate-dependent aminotransferase family. Histidinol-phosphate aminotransferase subfamily. Homodimer. Pyridoxal 5'-phosphate is required as a cofactor.

It catalyses the reaction L-histidinol phosphate + 2-oxoglutarate = 3-(imidazol-4-yl)-2-oxopropyl phosphate + L-glutamate. It participates in amino-acid biosynthesis; L-histidine biosynthesis; L-histidine from 5-phospho-alpha-D-ribose 1-diphosphate: step 7/9. This chain is Histidinol-phosphate aminotransferase, found in Campylobacter hominis (strain ATCC BAA-381 / DSM 21671 / CCUG 45161 / LMG 19568 / NCTC 13146 / CH001A).